The chain runs to 493 residues: Cysteine--tRNA ligase (493 aa).

C29 provides a ligand contact to Zn(2+). The 'HIGH' region signature appears at 31-41 (VTVYDLCHLGH). Zn(2+) is bound by residues C213, H238, and E242. Positions 270–274 (KMSKS) match the 'KMSKS' region motif. K273 is an ATP binding site.

The protein belongs to the class-I aminoacyl-tRNA synthetase family. Monomer. Zn(2+) is required as a cofactor.

It localises to the cytoplasm. The enzyme catalyses tRNA(Cys) + L-cysteine + ATP = L-cysteinyl-tRNA(Cys) + AMP + diphosphate. In Parasynechococcus marenigrum (strain WH8102), this protein is Cysteine--tRNA ligase.